The primary structure comprises 217 residues: Somatotropin (217 aa).

The first 27 residues, 1 to 27, serve as a signal peptide directing secretion; it reads MMAAGPRTSLLLAFTLLCLPWTQVVGA. His-46 contacts Zn(2+). An intrachain disulfide couples Cys-79 to Cys-190. Residue Ser-132 is modified to Phosphoserine. Glu-199 contacts Zn(2+). An intrachain disulfide couples Cys-207 to Cys-215.

Belongs to the somatotropin/prolactin family.

It is found in the secreted. Plays an important role in growth control. Its major role in stimulating body growth is to stimulate the liver and other tissues to secrete IGF1. It stimulates both the differentiation and proliferation of myoblasts. It also stimulates amino acid uptake and protein synthesis in muscle and other tissues. This chain is Somatotropin (GH1), found in Capra hircus (Goat).